The sequence spans 282 residues: DegV domain-containing protein M6_Spy0690 (282 aa).

The DegV domain occupies 3-280 (LAVITDSTAT…EGAIAFGVTP (278 aa)). Hexadecanoate is bound by residues Thr61 and Ser94.

In terms of biological role, may bind long-chain fatty acids, such as palmitate, and may play a role in lipid transport or fatty acid metabolism. In Streptococcus pyogenes serotype M6 (strain ATCC BAA-946 / MGAS10394), this protein is DegV domain-containing protein M6_Spy0690.